The following is a 182-amino-acid chain: Adenine phosphoribosyltransferase (182 aa).

It belongs to the purine/pyrimidine phosphoribosyltransferase family. In terms of assembly, homodimer.

Its subcellular location is the cytoplasm. It carries out the reaction AMP + diphosphate = 5-phospho-alpha-D-ribose 1-diphosphate + adenine. It participates in purine metabolism; AMP biosynthesis via salvage pathway; AMP from adenine: step 1/1. Its function is as follows. Catalyzes a salvage reaction resulting in the formation of AMP, that is energically less costly than de novo synthesis. This Pseudomonas entomophila (strain L48) protein is Adenine phosphoribosyltransferase.